A 247-amino-acid chain; its full sequence is Small ribosomal subunit protein uS2 (247 aa).

Belongs to the universal ribosomal protein uS2 family.

The polypeptide is Small ribosomal subunit protein uS2 (Fusobacterium nucleatum subsp. nucleatum (strain ATCC 25586 / DSM 15643 / BCRC 10681 / CIP 101130 / JCM 8532 / KCTC 2640 / LMG 13131 / VPI 4355)).